A 474-amino-acid chain; its full sequence is tRNA-2-methylthio-N(6)-dimethylallyladenosine synthase (474 aa).

Residues 3–120 (KKLHIKTWGC…LPDMIEQVRR (118 aa)) form the MTTase N-terminal domain. The [4Fe-4S] cluster site is built by C12, C49, C83, C157, C161, and C164. One can recognise a Radical SAM core domain in the interval 143-375 (RAEGPTAFVS…QDRITQQAMR (233 aa)). The TRAM domain maps to 378-441 (RHMMGTVQRI…TNSLRGKFIR (64 aa)).

It belongs to the methylthiotransferase family. MiaB subfamily. In terms of assembly, monomer. [4Fe-4S] cluster is required as a cofactor.

It localises to the cytoplasm. The enzyme catalyses N(6)-dimethylallyladenosine(37) in tRNA + (sulfur carrier)-SH + AH2 + 2 S-adenosyl-L-methionine = 2-methylsulfanyl-N(6)-dimethylallyladenosine(37) in tRNA + (sulfur carrier)-H + 5'-deoxyadenosine + L-methionine + A + S-adenosyl-L-homocysteine + 2 H(+). Catalyzes the methylthiolation of N6-(dimethylallyl)adenosine (i(6)A), leading to the formation of 2-methylthio-N6-(dimethylallyl)adenosine (ms(2)i(6)A) at position 37 in tRNAs that read codons beginning with uridine. The chain is tRNA-2-methylthio-N(6)-dimethylallyladenosine synthase from Shewanella sp. (strain W3-18-1).